Consider the following 333-residue polypeptide: 1,5-anhydro-D-fructose reductase (333 aa).

NADP(+) is bound by residues 9–12, 33–34, Arg-38, 71–76, 93–94, Asn-120, 162–163, and Tyr-283; these read ASTI, SS, TTNELH, EK, and WR.

This sequence belongs to the Gfo/Idh/MocA family. Monomer.

It catalyses the reaction 1,5-anhydro-D-mannitol + NADP(+) = 1,5-anhydro-D-fructose + NADPH + H(+). Catalyzes the NADPH-specific reduction of 1,5-anhydro-D-fructose to 1,5-anhydro-D-mannitol. This is 1,5-anhydro-D-fructose reductase (afr) from Rhizobium meliloti (strain 1021) (Ensifer meliloti).